The chain runs to 455 residues: Peroxisomal membrane protein PEX3 (455 aa).

Positions 113–125 are enriched in polar residues; the sequence is TVLSDDFSTSQEG. The interval 113 to 135 is disordered; it reads TVLSDDFSTSQEGAISEDTNKPP. Residues 155 to 171 form a helical membrane-spanning segment; that stretch reads FLTLIYCESLLIVFLHL.

Belongs to the peroxin-3 family. As to quaternary structure, component of the peroxisomal docking complex, composed of at least PEX3, PEX13, PEX14 and PEX17. Component of the peroxisomal translocation complex, composed of at least PEX3, PEX2, PEX10 and PEX12. Interacts with PEX19. Interacts with the pexophagy receptor ATG30.

Its subcellular location is the peroxisome membrane. Functionally, peroxisomal membrane protein required for peroxisome biosynthesis. Shared component of both the peroxisomal docking complex and the peroxisomal translocation complex. The two types of peroxisomal matrix targeting signals, PTS1 and PTS2, are first recognized in the cytosol by their receptors PEX5 and PEX7, respectively, which then carry the cargo to the peroxisomal membrane. The peroxisomal targeting signal (PTS) receptor-cargo complexes interact with peroxisomal membrane protein (PMP) components of the docking complex. They have then additional downstream interactions with the translocation complex, leading to the transport of fully folded and oligomerized cargo into the peroxisome matrix. PEX3 acts as an anchoring site for PEX19 on the peroxisomal membrane and thus plays a crucial role in the assembly of the peroxisomal translocation complex. Is also essential for the interaction between the two complexes. Finally. PEX3 activates selective autophagy of peroxisomes (pexophagy) via interaction with the pexophagy receptor ATG30. This Komagataella pastoris (Yeast) protein is Peroxisomal membrane protein PEX3.